The chain runs to 176 residues: T cell receptor beta constant 1 (176 aa).

The Ig-like C1-type domain occupies 8–117 (PEVAVFEPSE…WTQDRAKPVT (110 aa)). Cys30 and Cys95 form a disulfide bridge. A glycan (N-linked (GlcNAc...) asparagine) is linked at Asn69. Residues 130 to 144 (CGFTSVSYQQGVLSA) are connecting peptide. Residues 150–170 (ILLGKATLYAVLVSALVLMAM) form a helical membrane-spanning segment. At 171 to 176 (VKRKDF) the chain is on the cytoplasmic side.

As to quaternary structure, alpha-beta TR is a heterodimer composed of an alpha and beta chain; disulfide-linked. The alpha-beta TR is associated with the transmembrane signaling CD3 coreceptor proteins to form the TR-CD3 (TcR or TCR). The assembly of alpha-beta TR heterodimers with CD3 occurs in the endoplasmic reticulum where a single alpha-beta TR heterodimer associates with one CD3D-CD3E heterodimer, one CD3G-CD3E heterodimer and one CD247 homodimer forming a stable octameric structure. CD3D-CD3E and CD3G-CD3E heterodimers preferentially associate with TR alpha and TR beta chains, respectively. The association of the CD247 homodimer is the last step of TcR assembly in the endoplasmic reticulum and is required for transport to the cell surface.

The protein resides in the cell membrane. In terms of biological role, constant region of T cell receptor (TR) beta chain. Alpha-beta T cell receptors are antigen specific receptors which are essential to the immune response and are present on the cell surface of T lymphocytes. Recognize peptide-major histocompatibility (MH) (pMH) complexes that are displayed by antigen presenting cells (APC), a prerequisite for efficient T cell adaptive immunity against pathogens. Binding of alpha-beta TR to pMH complex initiates TR-CD3 clustering on the cell surface and intracellular activation of LCK that phosphorylates the ITAM motifs of CD3G, CD3D, CD3E and CD247 enabling the recruitment of ZAP70. In turn, ZAP70 phosphorylates LAT, which recruits numerous signaling molecules to form the LAT signalosome. The LAT signalosome propagates signal branching to three major signaling pathways, the calcium, the mitogen-activated protein kinase (MAPK) kinase and the nuclear factor NF-kappa-B (NF-kB) pathways, leading to the mobilization of transcription factors that are critical for gene expression and essential for T cell growth and differentiation. The T cell repertoire is generated in the thymus, by V-(D)-J rearrangement. This repertoire is then shaped by intrathymic selection events to generate a peripheral T cell pool of self-MH restricted, non-autoaggressive T cells. Post-thymic interaction of alpha-beta TR with the pMH complexes shapes TR structural and functional avidity. The sequence is that of T cell receptor beta constant 1 from Homo sapiens (Human).